Reading from the N-terminus, the 415-residue chain is JmjC domain-containing protein C (415 aa).

The segment at 97-140 is disordered; sequence NEKNNQSNNNNNNNNNNNNNNNNNNNNNNNNNNNNNNNNNNKPK. Over residues 104 to 137 the composition is skewed to low complexity; that stretch reads NNNNNNNNNNNNNNNNNNNNNNNNNNNNNNNNNN. The JmjC domain occupies 127–302; it reads NNNNNNNNNN…ELLKSNKLWC (176 aa).

The protein is JmjC domain-containing protein C (jcdC) of Dictyostelium discoideum (Social amoeba).